The following is a 789-amino-acid chain: Polyribonucleotide nucleotidyltransferase (789 aa).

Positions 494 and 500 each coordinate Mg(2+). Residues 561 to 620 form the KH domain; the sequence is PRIESIFINKDKIRNVIGSGGKNIREICEKTGARVEIMQDGTVMIYAINNDAVEYAKNMI. Positions 630–697 constitute an S1 motif domain; the sequence is GKVFDGTVIE…DREYVQLSMR (68 aa). Residues 709 to 789 are disordered; the sequence is GELYNIRKTN…NEVPRKPRFF (81 aa). Over residues 737–749 the composition is skewed to basic residues; the sequence is SEKKRRGSGRSRR. Over residues 763–780 the composition is skewed to low complexity; it reads NNGFGNGNRSFNDNRNGN.

It belongs to the polyribonucleotide nucleotidyltransferase family. Mg(2+) serves as cofactor.

The protein localises to the cytoplasm. The catalysed reaction is RNA(n+1) + phosphate = RNA(n) + a ribonucleoside 5'-diphosphate. Functionally, involved in mRNA degradation. Catalyzes the phosphorolysis of single-stranded polyribonucleotides processively in the 3'- to 5'-direction. The protein is Polyribonucleotide nucleotidyltransferase of Ehrlichia ruminantium (strain Welgevonden).